The sequence spans 366 residues: MSHNTFGHLFRVTTFGESHGVAIGCVVDGCPPQLALTVEEIQRDLDRRRPGQSRFTTQRQEADQVKILSGVMETASGQVTTGAPIALLIENTDQRSKDYSEIKDKFRPGHADFTYEAKYGLRDYRGGGRSSARETATRVAAGAIARKIVPGVTVRGALVQMGPHRIDREKWDWNEIARNPFFCPDKDKAAFFESYLDGIRKSGSSIGAVIEVVAEGVPAGLGAPIYAKLDGDLAAALMSINAVKGVEIGAGFGAAELSGEDNADEMRSSSSNMGNNGPVFLSNHAGGILGGISTGQPVVARFAVKPTSSILSPRKTVDRNGADTDIFTKGRHDPCVGIRAVPVGEAMVACVLADHFLRHRGQVGPR.

NADP(+) is bound by residues Arg-48 and Arg-54. FMN-binding positions include 129–131, 241–242, Gly-290, 305–309, and Arg-331; these read RSS, NA, and KPTSS.

It belongs to the chorismate synthase family. As to quaternary structure, homotetramer. Requires FMNH2 as cofactor.

It carries out the reaction 5-O-(1-carboxyvinyl)-3-phosphoshikimate = chorismate + phosphate. It participates in metabolic intermediate biosynthesis; chorismate biosynthesis; chorismate from D-erythrose 4-phosphate and phosphoenolpyruvate: step 7/7. Functionally, catalyzes the anti-1,4-elimination of the C-3 phosphate and the C-6 proR hydrogen from 5-enolpyruvylshikimate-3-phosphate (EPSP) to yield chorismate, which is the branch point compound that serves as the starting substrate for the three terminal pathways of aromatic amino acid biosynthesis. This reaction introduces a second double bond into the aromatic ring system. The protein is Chorismate synthase of Nitrobacter hamburgensis (strain DSM 10229 / NCIMB 13809 / X14).